Consider the following 1163-residue polypeptide: NACHT, LRR and PYD domains-containing protein 5 (1163 aa).

Composition is skewed to basic and acidic residues over residues 1 to 42 (MGPP…KDQG), 56 to 94 (PEKESKAILKARGLEEEQKSERKMTSPENDSKSIQKDQG), and 108 to 127 (PEKDSKAILKARGLEEEQKS). The interval 1–201 (MGPPEKESKA…TEADKDNGGD (201 aa)) is disordered. Residues 128–137 (ESTMSPSENV) show a composition bias toward polar residues. The span at 153 to 173 (ASERKMTSPENDSKSIQKDQG) shows a compositional bias: basic and acidic residues. Residues 243–565 (HTIILHGRPG…AALYYVLEGL (323 aa)) enclose the NACHT domain. 249–256 (GRPGVGKS) contacts ATP. 11 LRR repeats span residues 801 to 822 (NLKYLNLGNTPMKDDDMKLACE), 830 to 851 (SVETLRLDSCELTIIGYEMIST), 858 to 878 (RLKCLSLAKNRVGVKSMISLG), 887 to 906 (LLQKLILDNCGLTPASCHLL), 915 to 935 (NLTHLCLSNNSLGTEGVQQLC), 944 to 964 (ALQRLILNHCNIVDDAYGFLA), 972 to 993 (KLTHLSLTMNPVGDGAMKLLCE), 1001 to 1022 (YLQELELVDCQLTQNCCEDLAC), 1029 to 1050 (HLKSLDLGNNALGDKGVITLCE), 1058 to 1079 (SLRRLGLGACKLTSNCCEALSL), and 1086 to 1107 (HLNSLNLVKNDFSTSGMLKLCS).

The protein belongs to the NLRP family. In terms of assembly, component of the subcortical maternal complex (SCMC), at least composed of NLRP5, KHDC3, OOEP, and TLE6. Within the complex, interacts with OOEP, KHDC3 and TLE6. The SCMC may facilitate translocation of its components between the nuclear and cytoplasmic compartments. As part of the SCMC interacts with the SCMC-associated protein ZBED3. As part of the SCMC interacts with the SCMC-associated protein CFL1/Cofilin-1. Interacts with PRKCE. Interacts with TUBB3 at cytoskeleton microtubules. Post-translationally, phosphorylated by PRKCE.

It is found in the cytoplasm. It localises to the cytoplasmic vesicle. Its subcellular location is the secretory vesicle. The protein resides in the cortical granule. The protein localises to the mitochondrion. It is found in the nucleus. It localises to the nucleolus. Its subcellular location is the golgi apparatus. Functionally, component of the subcortical maternal complex (SCMC), a multiprotein complex that plays a key role in early embryonic development. The SCMC complex is a structural constituent of cytoplasmic lattices, which consist in fibrous structures found in the cytoplasm of oocytes and preimplantation embryos. They are required to store maternal proteins critical for embryonic development, such as proteins that control epigenetic reprogramming of the preimplantation embryo, and prevent their degradation or activation. Required for the localization of cortical granules to the cortex of oocytes, via association with the cortical actin scaffold. Required for cortical actin clearance prior to oocyte exocytosis and prevention of polyspermy. Involved in regulating post-fertilization Ca(2+) release and endoplasmic reticulum storage (ER) storage via regulation of cellular localization. May be involved in the localization of mitochondria to the cytoplasm and perinuclear region in oocytes and early stage embryos, independent of its role in CPL formation. This chain is NACHT, LRR and PYD domains-containing protein 5, found in Mus musculus (Mouse).